We begin with the raw amino-acid sequence, 149 residues long: Transcriptional repressor NrdR (149 aa).

A zinc finger lies at Cys3 to Cys34. In terms of domain architecture, ATP-cone spans Pro49 to Gln139.

It belongs to the NrdR family. Requires Zn(2+) as cofactor.

Negatively regulates transcription of bacterial ribonucleotide reductase nrd genes and operons by binding to NrdR-boxes. In Shewanella denitrificans (strain OS217 / ATCC BAA-1090 / DSM 15013), this protein is Transcriptional repressor NrdR.